The chain runs to 520 residues: Cytochrome P450 monooxygenase vrtE (520 aa).

A helical membrane pass occupies residues 16-36; sequence ALSLLHYVLGAIFLLLLFHML. Asparagine 137 carries N-linked (GlcNAc...) asparagine glycosylation. Cysteine 459 is a heme binding site.

The protein belongs to the cytochrome P450 family. Heme serves as cofactor.

It localises to the membrane. Its pathway is secondary metabolite biosynthesis; terpenoid biosynthesis. Cytochrome P450 monooxygenase; part of the gene cluster that mediates the biosynthesis of viridicatumtoxin, a tetracycline-like fungal meroterpenoid with a unique, fused spirobicyclic ring system. The first step of the pathway is the production of the malonamoyl-CoA starter unit for the polyketide synthase vrtA. The aldolase vrtJ may be involved in the synthesis of the malonamate substrate for malonamoyl-CoA synthetase vrtB. The polyketide synthase vrtA then may utilize the malonamoyl-CoA starter unit, followed by sequential condensation of eight malonyl-CoA units to form the polyketide backbone. The cyclization of the last ring could be mediated by the lactamase-like protein vrtG. The proposed post-PKS tailoring steps are a hydroxylation at C5 catalyzed the cytochrome P450 monooxygenase vrtE, a hydroxylation at C12a catalyzed by VrtH and/or VrtI, and an O-methylation by the O-methyltransferase vrtF. VrtC is then proposed to catalyze the transfer of a geranyl group synthesized by vrtD to the aromatic C ring of the tetracyclic polyketide intermediate of viridicatumtoxin to yield previridicatumtoxin. Finally, the cytochrome P450 monooxygenase vrtK catalyzes the spirocyclization of the geranyl moiety of previridicatumtoxin to afford viridicatumtoxin. This Penicillium aethiopicum protein is Cytochrome P450 monooxygenase vrtE.